We begin with the raw amino-acid sequence, 92 residues long: MEIKILKSERNYLELEIEGEDHTLGNLIAGTLRKISGVSFASYYQPHPLTDKIIVKILTDGSIAPKDALLKAIETVRVMASHYIDEIKGLSK.

Belongs to the archaeal Rpo11/eukaryotic RPB11/RPC19 RNA polymerase subunit family. In terms of assembly, part of the RNA polymerase complex.

It is found in the cytoplasm. The enzyme catalyses RNA(n) + a ribonucleoside 5'-triphosphate = RNA(n+1) + diphosphate. Its function is as follows. DNA-dependent RNA polymerase (RNAP) catalyzes the transcription of DNA into RNA using the four ribonucleoside triphosphates as substrates. The polypeptide is DNA-directed RNA polymerase subunit Rpo11 (Saccharolobus islandicus (strain Y.N.15.51 / Yellowstone #2) (Sulfolobus islandicus)).